The sequence spans 77 residues: EMBRYO SURROUNDING FACTOR 1-like protein 6 (77 aa).

Positions 1-25 (MSPSHFAILFIIVISLVPLHGYANG) are cleaved as a signal peptide. 4 cysteine pairs are disulfide-bonded: Cys-38–Cys-53, Cys-43–Cys-72, Cys-51–Cys-68, and Cys-54–Cys-61.

This sequence belongs to the MEG family.

The polypeptide is EMBRYO SURROUNDING FACTOR 1-like protein 6 (ESFL6) (Arabidopsis thaliana (Mouse-ear cress)).